A 252-amino-acid polypeptide reads, in one-letter code: Maintenance of carboxysome distribution protein A (252 aa).

G11, G12, G14, K15, T16, T17, Q41, E147, K151, F182, R183, L216, E217, and S218 together coordinate ATP. T16 contacts Mg(2+).

Belongs to the ParA family. McdA subfamily. Self-associates (probably a homodimer), interacts with McdB probably via the C-terminus of both proteins. Shows no signs of filament formation. Homodimerizes in the presence of ATP, making extra nucleotide contacts than with ADP or AMP-PNP. Each subunit binds 1 ATP molecule; Glu-147, Lys-151 and Arg-183 cross the dimer interface to contact ATP in the other subunit, while Phe-182, Arg-183 and Phe-221 stack with the adenine base in their own subunit.

It localises to the cytoplasm. Its subcellular location is the nucleoid. It carries out the reaction ATP + H2O = ADP + phosphate + H(+). McdA and McdB together mediate carboxysome (Cb) spacing, size, ultrastructure and probably inheritance in the cell. Together they prevent Cb aggregation. McdA is an ATPase that forms dynamic gradients on the nucleoid in response to adapter protein McdB, which associates with carboxysomes. The interplay between McdA gradients on the nucleoid and McdB-bound carboxysomes result in the equal spacing of Cbs along the cell length. Binds nucleoid DNA in an ATP-dependent manner; neither ADP nor ATP-gamma-S support DNA binding. Upon ATP-binding dimerizes and binds nucleoid DNA; the (McdA-ATP)2 dimer transiently binds McdB-bound Cbs. McdA's ATPase activity is stimulated 2-fold by DNA and McdB; ATP hydrolysis causes McdA release from DNA. Overexpression leads to loss of McdA oscillation, diffuse nucleoid staining by McdA with formation of large carboxysome aggregates that are in regions depleted of McdA; McdA remains nucleoid-associated. Functionally, mutagenesis studies (characterized in vivo) suggest ATP binding, protein dimerization and a conformational change are necessary for nucleoid DNA-binding and binding to McdB-bound Cbs, which tethers Cbs to the nucleoid. Eventual McdB-stimulated ATP hydrolysis causes de-dimerization of McdA which no longer binds the nucleoid and releases McdB and Cbs. McdB-bound Cbs then move to a region of higher McdA concentration, distributing Cbs across the nucleoid. In terms of biological role, incorrect positioning (aggregation) of carboxysomes results in reduced CO(2) fixation by encapsulated ribulose-1,5-bisphosphate carboxylase (RuBisCO, cbbL/cbbS), which leads to slower growth, cell elongation, asymmetric cell division and an increase in RuBisCO levels. The polypeptide is Maintenance of carboxysome distribution protein A (Synechococcus elongatus (strain ATCC 33912 / PCC 7942 / FACHB-805) (Anacystis nidulans R2)).